The chain runs to 248 residues: Stage II sporulation protein SA (248 aa).

The Extracellular segment spans residues 1–3; it reads MVL. A helical membrane pass occupies residues 4 to 21; the sequence is FFQIMVWCIVAGLGLYVY. The Cytoplasmic segment spans residues 22-41; it reads ATWRFEAKVKEKMSAIRKTW. A helical membrane pass occupies residues 42-64; it reads YLLFVLGAMVYWTYEPTSLFTHW. At 65–67 the chain is on the extracellular side; that stretch reads ERY. The chain crosses the membrane as a helical span at residues 68–87; it reads LIVAVSFALIDAFIFLSAYV. Residues 88 to 248 lie on the Cytoplasmic side of the membrane; the sequence is KKLAGSELET…VLPIEEEGEG (161 aa).

Belongs to the SpoIISA toxin family. Probably forms an oligomer; X-ray data suggests the inactive complex forms a heterotetramer of SpoIISA(2)-SpoIISB(2), which inactivates the toxic activity of SpoIISA.

Its subcellular location is the cell membrane. In terms of biological role, toxic component of a type II toxin-antitoxin (TA) system. Its toxic activity is neutralized by cognate antitoxin SpoIISB. Expression in the absence of SpoIISB permits sporulation to stage II, when plasmolysis zones and holes in the peptidoglycan layer are observed, resulting in cell death. Lethal when synthesized during vegetative growth in the absence of SpoIISB. In E.coli both the membrane bound and soluble domain are required in cis for toxin activity. This is Stage II sporulation protein SA (spoIISA) from Bacillus subtilis (strain 168).